A 392-amino-acid polypeptide reads, in one-letter code: Aspartate aminotransferase (392 aa).

Residues glycine 40, tryptophan 126, and asparagine 176 each contribute to the L-aspartate site. Lysine 239 carries the post-translational modification N6-(pyridoxal phosphate)lysine.

It belongs to the class-I pyridoxal-phosphate-dependent aminotransferase family. Homodimer. Requires pyridoxal 5'-phosphate as cofactor.

It localises to the cytoplasm. It carries out the reaction L-aspartate + 2-oxoglutarate = oxaloacetate + L-glutamate. In Bacillus sp. (strain YM-2), this protein is Aspartate aminotransferase.